The primary structure comprises 85 residues: Putative regulatory protein Dtur_1444 (85 aa).

Belongs to the RemA family.

The protein is Putative regulatory protein Dtur_1444 of Dictyoglomus turgidum (strain DSM 6724 / Z-1310).